The following is a 371-amino-acid chain: Leu/Ile/Val-binding protein homolog 1 (371 aa).

The first 23 residues, 1 to 23 (MRKTLFSGVALAAVIAFGGSAWA), serve as a signal peptide directing secretion.

It belongs to the leucine-binding protein family.

Component of an amino-acid transport system. The polypeptide is Leu/Ile/Val-binding protein homolog 1 (Brucella suis biovar 1 (strain 1330)).